Here is a 347-residue protein sequence, read N- to C-terminus: Endo-1,4-beta-xylanase 3 (347 aa).

The first 16 residues, 1 to 16 (MKANVILCLLAPLVAA), serve as a signal peptide directing secretion. Positions 17-45 (LPTETIHLDPELAALRANLTERTADLWDR) are excised as a propeptide. Position 46 is a pyrrolidone carboxylic acid (glutamine 46). Residues 46–345 (QASQSIDQLI…KPAYNSIVGI (300 aa)) enclose the GH10 domain. The Proton donor role is filled by glutamate 176. The Nucleophile role is filled by glutamate 282. Residues cysteine 300 and cysteine 306 are joined by a disulfide bond.

Belongs to the glycosyl hydrolase 10 (cellulase F) family. Monomer. In terms of processing, not glycosylated.

It localises to the secreted. It carries out the reaction Endohydrolysis of (1-&gt;4)-beta-D-xylosidic linkages in xylans.. Its pathway is glycan degradation; xylan degradation. Its function is as follows. Glycoside hydrolase involved in the hydrolysis of xylan, a major plant cell wall hemicellulose made up of 1,4-beta-linked D-xylopyranose residues. Catalyzes the endohydrolysis of the main-chain 1,4-beta-glycosidic bonds connecting the xylose subunits yielding various xylooligosaccharides and xylose. Produces xylobiose and xylotriose as the main degradation products. The chain is Endo-1,4-beta-xylanase 3 (xyn3) from Hypocrea jecorina (strain QM6a) (Trichoderma reesei).